Consider the following 275-residue polypeptide: MENRYAVHPEQVKRFTTEELRRHFHIPTLFVSGELKLYYSHEDRVVIGGVMPSAEPLKLDAGDFLRTEYFLERREIGIVNVGGQGTVTVDGEAFVLEHKDFLYIGLGHEDVQFASASGEEAKFYLVSATAHQAYPTQKAAIAELTPNHLGEASASNVRNLYQVIHANGIQSCQLMMGITQLETNNTWNTMPAHIHDRRMEVYLYLDIEEDARVFHFMGEPSETRHLVLANEEAVISPAWSIHSGSGTANYSFIWAMAGENYTFKDMDFVPMDQLR.

The Zn(2+) site is built by His-193, His-195, Glu-200, and His-242.

It belongs to the KduI family. The cofactor is Zn(2+).

It carries out the reaction 5-dehydro-4-deoxy-D-glucuronate = 3-deoxy-D-glycero-2,5-hexodiulosonate. It participates in glycan metabolism; pectin degradation; 2-dehydro-3-deoxy-D-gluconate from pectin: step 4/5. Its function is as follows. Catalyzes the isomerization of 5-dehydro-4-deoxy-D-glucuronate to 3-deoxy-D-glycero-2,5-hexodiulosonate. This is 4-deoxy-L-threo-5-hexosulose-uronate ketol-isomerase from Bacillus pumilus (strain SAFR-032).